Reading from the N-terminus, the 103-residue chain is MTGFKVSSFFYILALSRFFNAGRERACDKLKITVTHLYWFIIRKLLLHEVHVHVSRVCNVSFILSPCLFRNFFTLSLHVLYVMYEQALTPEFFRQWWDIIQSK.

An N-terminal signal peptide occupies residues 1–21; sequence MTGFKVSSFFYILALSRFFNA.

This is an uncharacterized protein from Saccharomyces cerevisiae (strain ATCC 204508 / S288c) (Baker's yeast).